A 208-amino-acid polypeptide reads, in one-letter code: Large ribosomal subunit protein uL4 (208 aa).

Positions 50 to 83 (VKTRAEVSGGGRKPWKQKGTGRARQGSIRAPQWK) are disordered.

The protein belongs to the universal ribosomal protein uL4 family. As to quaternary structure, part of the 50S ribosomal subunit.

In terms of biological role, one of the primary rRNA binding proteins, this protein initially binds near the 5'-end of the 23S rRNA. It is important during the early stages of 50S assembly. It makes multiple contacts with different domains of the 23S rRNA in the assembled 50S subunit and ribosome. Its function is as follows. Forms part of the polypeptide exit tunnel. This is Large ribosomal subunit protein uL4 from Mycoplasma mycoides subsp. mycoides SC (strain CCUG 32753 / NCTC 10114 / PG1).